Reading from the N-terminus, the 265-residue chain is Neuronal membrane glycoprotein M6-b (265 aa).

A helical transmembrane segment spans residues 31 to 51 (GGVPYASLVATILCFSGVALF). N-linked (GlcNAc...) asparagine glycosylation occurs at N73. Transmembrane regions (helical) follow at residues 90–110 (VIYG…AEGF) and 136–156 (FVFL…FSAV). N-linked (GlcNAc...) asparagine glycosylation occurs at N177. A helical transmembrane segment spans residues 224-244 (LFIVACAGAGATVIALLIYMM). A Phosphoserine modification is found at S257.

This sequence belongs to the myelin proteolipid protein family. Interacts with SERT. In terms of tissue distribution, highly expressed in the ventral medullary surface, moderately in the cerebral cortex and cerebellum, poorly in lung and kidney, and not at all in heart, skeletal muscle, liver, stomach or stomach.

It is found in the membrane. It localises to the cell membrane. Functionally, may be involved in neural development. Involved in regulation of osteoblast function and bone formation. Involved in matrix vesicle release by osteoblasts; this function seems to involve maintenance of the actin cytoskeleton. May be involved in cellular trafficking of SERT and thereby in regulation of serotonin uptake. The sequence is that of Neuronal membrane glycoprotein M6-b (Gpm6b) from Rattus norvegicus (Rat).